Consider the following 1158-residue polypeptide: Rho1 guanine nucleotide exchange factor 2 (1158 aa).

Residues 42–141 (RSSGSITHSP…SFSVSDVSNG (100 aa)) are disordered. Residues 45–63 (GSITHSPTALSSTTSLNEN) are compositionally biased toward polar residues. The segment covering 68–81 (FRPASSLSFSPSSL) has biased composition (low complexity). Positions 97–108 (KNNFYRRSSSTD) are enriched in polar residues. Residues 132-141 (SFSVSDVSNG) show a composition bias toward low complexity. Residues 447-634 (KRQEIIFEVI…REFLTKLNYE (188 aa)) enclose the DH domain. Residues 670-805 (LIFKGVVKLK…QHIEKQQDII (136 aa)) form the PH domain. Phosphoserine occurs at positions 746 and 747. The CNH domain occupies 825-1120 (GNKLLCAVAY…KLLTDGRGLI (296 aa)).

Its subcellular location is the cytoplasm. Stimulates the exchange of Rho1 and Rho5 GDP-bound form into GTP-bound form. Controls septum formation, cell wall synthesis and localization of F-actin patches. This Schizosaccharomyces pombe (strain 972 / ATCC 24843) (Fission yeast) protein is Rho1 guanine nucleotide exchange factor 2 (rgf2).